The primary structure comprises 371 residues: Protein OSB2, chloroplastic (371 aa).

The transit peptide at 1-20 (MSLISKSLARIECSPFFYPR) directs the protein to the chloroplast. Residues 45–64 (GKTGNGERKQRAKAPAKTPE) are disordered. One can recognise an SSB domain in the interval 97–195 (VANWVNLIGF…VLVQNLNFIQ (99 aa)). PDF region regions lie at residues 237–289 (WNHL…PKLE) and 312–360 (WKDL…PKLP).

As to expression, expressed in the floral abscission zone.

Its subcellular location is the plastid. It is found in the chloroplast. Its function is as follows. Binds preferentially single-stranded DNA. Does not bind to RNA. This Arabidopsis thaliana (Mouse-ear cress) protein is Protein OSB2, chloroplastic (OSB2).